Here is a 311-residue protein sequence, read N- to C-terminus: Malate dehydrogenase (311 aa).

NAD(+) contacts are provided by residues 7–13 and D34; that span reads GAAGGIG. R81 and R87 together coordinate substrate. Residues N94 and 117–119 contribute to the NAD(+) site; that span reads ITN. Substrate-binding residues include N119 and R153. Catalysis depends on H177, which acts as the Proton acceptor. M227 serves as a coordination point for NAD(+).

The protein belongs to the LDH/MDH superfamily. MDH type 1 family. Homodimer.

The catalysed reaction is (S)-malate + NAD(+) = oxaloacetate + NADH + H(+). In terms of biological role, catalyzes the reversible oxidation of malate to oxaloacetate. The protein is Malate dehydrogenase of Shewanella woodyi (strain ATCC 51908 / MS32).